The primary structure comprises 310 residues: Vomeronasal type-1 receptor 40 (310 aa).

Over 1-20 the chain is Extracellular; it reads MNKANMLRTDKDMQIILFSE. The helical transmembrane segment at 21–41 threads the bilayer; sequence VSVGISANSILFIAHVCMILG. Residues 42 to 50 are Cytoplasmic-facing; the sequence is ENRPKPIDL. The helical transmembrane segment at 51-71 threads the bilayer; it reads YIAFLSLTQLMLLITMGLIAV. Residues 72-93 are Extracellular-facing; that stretch reads DMFLSQGIWDSTTCQSLIYLHR. Cys85 and Cys172 are disulfide-bonded. Residues 94-114 form a helical membrane-spanning segment; the sequence is LLRGLSLCATCLLNILWTITL. Over 115 to 134 the chain is Cytoplasmic; sequence SSRSFCSTKFKHKSPHHISG. Residues 135–155 traverse the membrane as a helical segment; the sequence is AFIFFCVLYMSFSSHLFISII. Residues 156 to 190 are Extracellular-facing; it reads ATHNLTSENFIYVTQSCSLLPLSYSRTSMFSAPMA. Asn159 is a glycosylation site (N-linked (GlcNAc...) asparagine). A helical membrane pass occupies residues 191–211; that stretch reads IREAFLVSLMALSSGYMVALL. Residues 212 to 238 lie on the Cytoplasmic side of the membrane; the sequence is WRHKKQAQHLHSTSLSSKASPEQRATR. The chain crosses the membrane as a helical span at residues 239 to 259; the sequence is TILLLMSFFVVLYILENAVFY. The Extracellular segment spans residues 260 to 268; sequence SRIKFKDGS. Residues 269-289 form a helical membrane-spanning segment; that stretch reads ILYCVQIILCHSYATVNPFVF. The Cytoplasmic segment spans residues 290 to 310; the sequence is ICTEKHIIKFWESKCGRIVNI.

It belongs to the G-protein coupled receptor 1 family.

It localises to the cell membrane. Functionally, putative pheromone receptor implicated in the regulation of social and reproductive behavior. The protein is Vomeronasal type-1 receptor 40 (Vmn1r40) of Mus musculus (Mouse).